Here is a 455-residue protein sequence, read N- to C-terminus: Bifunctional protein GlmU (455 aa).

Residues 1-227 (MGLSVIILAA…CEEVQGVNDR (227 aa)) are pyrophosphorylase. UDP-N-acetyl-alpha-D-glucosamine is bound by residues 8–11 (LAAG), Lys-22, Gln-73, 78–79 (GT), 100–102 (YGD), Gly-137, Glu-152, Asn-167, and Asn-225. Asp-102 serves as a coordination point for Mg(2+). Asn-225 is a binding site for Mg(2+). The tract at residues 228–248 (WELTKLERYYQRLMAKKLSLA) is linker. The interval 249 to 455 (GVTIIDPERF…KGWHRPTKKE (207 aa)) is N-acetyltransferase. Positions 332 and 350 each coordinate UDP-N-acetyl-alpha-D-glucosamine. Residue His-362 is the Proton acceptor of the active site. The UDP-N-acetyl-alpha-D-glucosamine site is built by Tyr-365 and Asn-376. Acetyl-CoA is bound by residues Ala-379, 385–386 (NY), Ser-404, Ala-422, and Arg-439.

It in the N-terminal section; belongs to the N-acetylglucosamine-1-phosphate uridyltransferase family. This sequence in the C-terminal section; belongs to the transferase hexapeptide repeat family. Homotrimer. Requires Mg(2+) as cofactor.

It is found in the cytoplasm. The catalysed reaction is alpha-D-glucosamine 1-phosphate + acetyl-CoA = N-acetyl-alpha-D-glucosamine 1-phosphate + CoA + H(+). The enzyme catalyses N-acetyl-alpha-D-glucosamine 1-phosphate + UTP + H(+) = UDP-N-acetyl-alpha-D-glucosamine + diphosphate. Its pathway is nucleotide-sugar biosynthesis; UDP-N-acetyl-alpha-D-glucosamine biosynthesis; N-acetyl-alpha-D-glucosamine 1-phosphate from alpha-D-glucosamine 6-phosphate (route II): step 2/2. It participates in nucleotide-sugar biosynthesis; UDP-N-acetyl-alpha-D-glucosamine biosynthesis; UDP-N-acetyl-alpha-D-glucosamine from N-acetyl-alpha-D-glucosamine 1-phosphate: step 1/1. It functions in the pathway bacterial outer membrane biogenesis; LPS lipid A biosynthesis. In terms of biological role, catalyzes the last two sequential reactions in the de novo biosynthetic pathway for UDP-N-acetylglucosamine (UDP-GlcNAc). The C-terminal domain catalyzes the transfer of acetyl group from acetyl coenzyme A to glucosamine-1-phosphate (GlcN-1-P) to produce N-acetylglucosamine-1-phosphate (GlcNAc-1-P), which is converted into UDP-GlcNAc by the transfer of uridine 5-monophosphate (from uridine 5-triphosphate), a reaction catalyzed by the N-terminal domain. The protein is Bifunctional protein GlmU of Coxiella burnetii (strain Dugway 5J108-111).